The primary structure comprises 840 residues: Lon protease homolog 2, peroxisomal (840 aa).

The 210-residue stretch at 13-222 (LPLLCTHDGV…KALPLLTRQI (210 aa)) folds into the Lon N-terminal domain. 375–382 (GPPGVGKT) is a binding site for ATP. Residues 583-606 (QKVSRSEAPTEQHAEQNTDSKVED) are disordered. The span at 584–606 (KVSRSEAPTEQHAEQNTDSKVED) shows a compositional bias: basic and acidic residues. The region spanning 641-825 (LTLPGVAIGL…DEVLNAAFDG (185 aa)) is the Lon proteolytic domain. Catalysis depends on residues S731 and K774. The Microbody targeting signal motif lies at 838–840 (SKL).

The protein belongs to the peptidase S16 family.

It is found in the peroxisome matrix. It carries out the reaction Hydrolysis of proteins in presence of ATP.. In terms of biological role, ATP-dependent serine protease that mediates the selective degradation of misfolded and unassembled polypeptides in the peroxisomal matrix. Necessary for type 2 peroxisome targeting signal (PTS2)-containing protein processing and facilitates peroxisome matrix protein import. In Danio rerio (Zebrafish), this protein is Lon protease homolog 2, peroxisomal (lonp2).